Reading from the N-terminus, the 293-residue chain is GTP cyclohydrolase FolE2 (293 aa).

It belongs to the GTP cyclohydrolase IV family.

It carries out the reaction GTP + H2O = 7,8-dihydroneopterin 3'-triphosphate + formate + H(+). The protein operates within cofactor biosynthesis; 7,8-dihydroneopterin triphosphate biosynthesis; 7,8-dihydroneopterin triphosphate from GTP: step 1/1. Functionally, converts GTP to 7,8-dihydroneopterin triphosphate. In Pseudomonas entomophila (strain L48), this protein is GTP cyclohydrolase FolE2.